A 434-amino-acid chain; its full sequence is Histidinol dehydrogenase (434 aa).

NAD(+) contacts are provided by tyrosine 130, glutamine 188, and asparagine 211. Substrate is bound by residues serine 237, glutamine 259, and histidine 262. Glutamine 259 and histidine 262 together coordinate Zn(2+). Residues glutamate 326 and histidine 327 each act as proton acceptor in the active site. Residues histidine 327, aspartate 360, glutamate 414, and histidine 419 each coordinate substrate. Aspartate 360 lines the Zn(2+) pocket. Histidine 419 is a binding site for Zn(2+).

It belongs to the histidinol dehydrogenase family. In terms of assembly, homodimer. Zn(2+) is required as a cofactor.

The catalysed reaction is L-histidinol + 2 NAD(+) + H2O = L-histidine + 2 NADH + 3 H(+). It functions in the pathway amino-acid biosynthesis; L-histidine biosynthesis; L-histidine from 5-phospho-alpha-D-ribose 1-diphosphate: step 9/9. Functionally, catalyzes the sequential NAD-dependent oxidations of L-histidinol to L-histidinaldehyde and then to L-histidine. This Salmonella choleraesuis (strain SC-B67) protein is Histidinol dehydrogenase.